The following is a 556-amino-acid chain: Potassium-transporting ATPase potassium-binding subunit (556 aa).

10 helical membrane passes run 1–21 (MTWI…GIAQ), 60–80 (SYAR…YALQ), 130–150 (GLCV…VALI), 173–193 (LRIL…GGAV), 245–265 (PQPW…FSLP), 281–301 (ILAA…AAEF), 374–394 (GLYG…LLVG), 416–436 (ILVM…VPGL), 482–502 (AALG…ILAL), and 529–549 (LIVF…LTLG).

This sequence belongs to the KdpA family. The system is composed of three essential subunits: KdpA, KdpB and KdpC.

The protein localises to the cell membrane. Functionally, part of the high-affinity ATP-driven potassium transport (or Kdp) system, which catalyzes the hydrolysis of ATP coupled with the electrogenic transport of potassium into the cytoplasm. This subunit binds the extracellular potassium ions and delivers the ions to the membrane domain of KdpB through an intramembrane tunnel. The sequence is that of Potassium-transporting ATPase potassium-binding subunit from Cutibacterium acnes (strain DSM 16379 / KPA171202) (Propionibacterium acnes).